A 505-amino-acid chain; its full sequence is Flagellin (505 aa).

It belongs to the bacterial flagellin family.

Its subcellular location is the secreted. The protein localises to the bacterial flagellum. In terms of biological role, flagellin is the subunit protein which polymerizes to form the filaments of bacterial flagella. The chain is Flagellin (fliC) from Salmonella senftenberg.